Consider the following 173-residue polypeptide: Shikimate kinase (173 aa).

11-16 (GAGKTT) contributes to the ATP binding site. Thr15 contacts Mg(2+). 3 residues coordinate substrate: Asp33, Arg57, and Gly79. An ATP-binding site is contributed by Arg118. Arg140 contacts substrate.

This sequence belongs to the shikimate kinase family. In terms of assembly, monomer. It depends on Mg(2+) as a cofactor.

The protein resides in the cytoplasm. The enzyme catalyses shikimate + ATP = 3-phosphoshikimate + ADP + H(+). The protein operates within metabolic intermediate biosynthesis; chorismate biosynthesis; chorismate from D-erythrose 4-phosphate and phosphoenolpyruvate: step 5/7. In terms of biological role, catalyzes the specific phosphorylation of the 3-hydroxyl group of shikimic acid using ATP as a cosubstrate. In Parabacteroides distasonis (strain ATCC 8503 / DSM 20701 / CIP 104284 / JCM 5825 / NCTC 11152), this protein is Shikimate kinase.